Reading from the N-terminus, the 361-residue chain is Ankyrin repeat domain-containing protein 16 (361 aa).

9 ANK repeats span residues 36 to 66 (AGDTLLHCAARHGRQDILAYLVEAWSMDIEA), 70 to 99 (DYKRPLHEAASMGHRDCVRYLLGRGAVVDS), 103 to 132 (ADWTPLMMACTRKNLDVIQDLVEHGANPLL), 136 to 165 (DGWNSFHIASREGHPVILRYLLTVCPDAWK), 170 to 200 (IRRTPLHTAAMHGCLEAVQVLLERCHYEPDC), 204 to 233 (CGVTPFMDAIQCGHVSIAKLLLEQHKACSS), 238 to 268 (MGAQALHRAAVTGQDEAIRFLVCGLGIDVDV), 273 to 302 (SQLTALHYAAKEGQTNTVQTLLSLGADINS), and 306 to 335 (RNRSVLHLACAGQHVACTRLLLQSGLKDSE).

In terms of assembly, interacts with AARS; the interaction is direct. In terms of tissue distribution, widely expressed in brain (at protein level).

The protein localises to the cytoplasm. The protein resides in the nucleus. Functionally, required to prevent the misactivation of serine (Ser) with tRNA(Ala) by promoting the hydrolysis of Ser-mischarged tRNA(Ala), thereby playing a role in translational fidelity. Binds directly to the catalytic domain of AARS/AlaRS and captures Ser that is misactivated by AARS/AlaRS, preventing the charging of Ser adenylates to tRNA(Ala) and precluding Ser misincorporation in nascent peptides. In Mus musculus (Mouse), this protein is Ankyrin repeat domain-containing protein 16.